We begin with the raw amino-acid sequence, 408 residues long: Arylacetamide deacetylase-like 3 (408 aa).

Helical transmembrane passes span 2-22 (VVLA…GSLL), 46-66 (ILSC…KLGL), and 109-129 (SSIP…IGSL). The Involved in the stabilization of the negatively charged intermediate by the formation of the oxyanion hole motif lies at 120–122 (HGG). S194 is a catalytic residue. A glycan (N-linked (GlcNAc...) asparagine) is linked at N321. Residues D348 and H378 contribute to the active site.

This sequence belongs to the 'GDXG' lipolytic enzyme family.

It is found in the membrane. This is Arylacetamide deacetylase-like 3 (Aadacl3) from Mus musculus (Mouse).